The following is a 432-amino-acid chain: 3-phosphoshikimate 1-carboxyvinyltransferase (432 aa).

Residues Lys-22, Ser-23, and Arg-27 each coordinate 3-phosphoshikimate. Lys-22 is a phosphoenolpyruvate binding site. 2 residues coordinate phosphoenolpyruvate: Gly-96 and Arg-127. 3-phosphoshikimate is bound by residues Ser-173, Ser-174, Gln-175, Ser-201, Asp-316, Asn-339, and Lys-343. Position 175 (Gln-175) interacts with phosphoenolpyruvate. The active-site Proton acceptor is Asp-316. Positions 347, 391, and 416 each coordinate phosphoenolpyruvate.

Belongs to the EPSP synthase family. Monomer.

The protein localises to the cytoplasm. It catalyses the reaction 3-phosphoshikimate + phosphoenolpyruvate = 5-O-(1-carboxyvinyl)-3-phosphoshikimate + phosphate. Its pathway is metabolic intermediate biosynthesis; chorismate biosynthesis; chorismate from D-erythrose 4-phosphate and phosphoenolpyruvate: step 6/7. Functionally, catalyzes the transfer of the enolpyruvyl moiety of phosphoenolpyruvate (PEP) to the 5-hydroxyl of shikimate-3-phosphate (S3P) to produce enolpyruvyl shikimate-3-phosphate and inorganic phosphate. The polypeptide is 3-phosphoshikimate 1-carboxyvinyltransferase (Haemophilus influenzae (strain PittGG)).